The following is a 96-amino-acid chain: NADH-ubiquinone oxidoreductase chain 4L (96 aa).

3 helical membrane-spanning segments follow: residues M1–L21, M27–F47, and I61–I81.

The protein belongs to the complex I subunit 4L family.

Its subcellular location is the mitochondrion membrane. It catalyses the reaction a ubiquinone + NADH + 5 H(+)(in) = a ubiquinol + NAD(+) + 4 H(+)(out). Its function is as follows. Core subunit of the mitochondrial membrane respiratory chain NADH dehydrogenase (Complex I) which catalyzes electron transfer from NADH through the respiratory chain, using ubiquinone as an electron acceptor. Part of the enzyme membrane arm which is embedded in the lipid bilayer and involved in proton translocation. The sequence is that of NADH-ubiquinone oxidoreductase chain 4L (MT-ND4L) from Lycodon semicarinatus (Ryukyu odd-tooth snake).